Reading from the N-terminus, the 423-residue chain is Glucose-1-phosphate adenylyltransferase (423 aa).

Alpha-D-glucose 1-phosphate contacts are provided by residues tyrosine 100, glycine 165, 180 to 181 (EK), and serine 191.

It belongs to the bacterial/plant glucose-1-phosphate adenylyltransferase family. In terms of assembly, homotetramer.

It carries out the reaction alpha-D-glucose 1-phosphate + ATP + H(+) = ADP-alpha-D-glucose + diphosphate. It functions in the pathway glycan biosynthesis; glycogen biosynthesis. In terms of biological role, involved in the biosynthesis of ADP-glucose, a building block required for the elongation reactions to produce glycogen. Catalyzes the reaction between ATP and alpha-D-glucose 1-phosphate (G1P) to produce pyrophosphate and ADP-Glc. This Lachnospira eligens (strain ATCC 27750 / DSM 3376 / VPI C15-48 / C15-B4) (Eubacterium eligens) protein is Glucose-1-phosphate adenylyltransferase.